A 119-amino-acid chain; its full sequence is Large ribosomal subunit protein uL18 (119 aa).

This sequence belongs to the universal ribosomal protein uL18 family. As to quaternary structure, part of the 50S ribosomal subunit; part of the 5S rRNA/L5/L18/L25 subcomplex. Contacts the 5S and 23S rRNAs.

Its function is as follows. This is one of the proteins that bind and probably mediate the attachment of the 5S RNA into the large ribosomal subunit, where it forms part of the central protuberance. The polypeptide is Large ribosomal subunit protein uL18 (Jannaschia sp. (strain CCS1)).